The chain runs to 507 residues: Cyclin-dependent kinase-like 2 (507 aa).

Positions 4-289 (YENLGLVGEG…CADLLHHDFF (286 aa)) constitute a Protein kinase domain. ATP contacts are provided by residues 10-18 (VGEGSYGMV) and Lys33. Residues 45–51 (KKIAMRE) carry the [NKR]KIAxRE motif. The Proton acceptor role is filled by Asp126. A disordered region spans residues 365–392 (KTEKGTRASNGSCLHDNGTSHKGLSSTS).

This sequence belongs to the protein kinase superfamily. CMGC Ser/Thr protein kinase family. CDC2/CDKX subfamily.

It localises to the cytoplasm. The protein localises to the nucleus. It carries out the reaction L-seryl-[protein] + ATP = O-phospho-L-seryl-[protein] + ADP + H(+). It catalyses the reaction L-threonyl-[protein] + ATP = O-phospho-L-threonyl-[protein] + ADP + H(+). The sequence is that of Cyclin-dependent kinase-like 2 from Rattus norvegicus (Rat).